Consider the following 193-residue polypeptide: ATP synthase subunit b 1 (193 aa).

The segment at 9 to 28 is disordered; the sequence is QEADHTAGETHTETGVAEGG. Basic and acidic residues predominate over residues 10-20; sequence EADHTAGETHT. Residues 40 to 59 traverse the membrane as a helical segment; that stretch reads TYPSQLLWLAITFGLFYLFL.

It belongs to the ATPase B chain family. In terms of assembly, F-type ATPases have 2 components, F(1) - the catalytic core - and F(0) - the membrane proton channel. F(1) has five subunits: alpha(3), beta(3), gamma(1), delta(1), epsilon(1). F(0) has three main subunits: a(1), b(2) and c(10-14). The alpha and beta chains form an alternating ring which encloses part of the gamma chain. F(1) is attached to F(0) by a central stalk formed by the gamma and epsilon chains, while a peripheral stalk is formed by the delta and b chains.

Its subcellular location is the cell inner membrane. Its function is as follows. F(1)F(0) ATP synthase produces ATP from ADP in the presence of a proton or sodium gradient. F-type ATPases consist of two structural domains, F(1) containing the extramembraneous catalytic core and F(0) containing the membrane proton channel, linked together by a central stalk and a peripheral stalk. During catalysis, ATP synthesis in the catalytic domain of F(1) is coupled via a rotary mechanism of the central stalk subunits to proton translocation. Component of the F(0) channel, it forms part of the peripheral stalk, linking F(1) to F(0). This is ATP synthase subunit b 1 from Chelativorans sp. (strain BNC1).